Here is a 265-residue protein sequence, read N- to C-terminus: uncharacterized protein (265 aa).

Residues 143–205 (ATQKALKDSI…EKLIKSVEKA (63 aa)) adopt a coiled-coil conformation.

This is an uncharacterized protein from Aquifex aeolicus (strain VF5).